The primary structure comprises 823 residues: ATP-dependent RNA helicase HrpA (823 aa).

A Helicase ATP-binding domain is found at Ile-16–Glu-179. Ser-29–Thr-36 contributes to the ATP binding site. A DEAH box motif is present at residues Asp-126 to His-129. The region spanning Lys-203 to Gly-374 is the Helicase C-terminal domain.

The protein belongs to the DEAD box helicase family. DEAH subfamily.

The enzyme catalyses ATP + H2O = ADP + phosphate + H(+). In terms of biological role, has RNA-stimulated ATPase activity and RNA helicase activity. Involved in global regulation of gene expression. Could be involved in RNA processing and post-transcriptional gene regulation. Essential for both tick transmission and mouse infection. This is ATP-dependent RNA helicase HrpA from Borreliella burgdorferi (strain ATCC 35210 / DSM 4680 / CIP 102532 / B31) (Borrelia burgdorferi).